The chain runs to 628 residues: DNA ligase (628 aa).

NAD(+)-binding positions include D36–D40, S85–L86, and E117. K119 functions as the N6-AMP-lysine intermediate in the catalytic mechanism. NAD(+)-binding residues include R140, E174, K309, and K333. Zn(2+) is bound by residues C427, C430, C446, and C452.

The protein belongs to the NAD-dependent DNA ligase family. LigA subfamily. Mg(2+) serves as cofactor. The cofactor is Mn(2+).

The catalysed reaction is NAD(+) + (deoxyribonucleotide)n-3'-hydroxyl + 5'-phospho-(deoxyribonucleotide)m = (deoxyribonucleotide)n+m + AMP + beta-nicotinamide D-nucleotide.. Functionally, DNA ligase that catalyzes the formation of phosphodiester linkages between 5'-phosphoryl and 3'-hydroxyl groups in double-stranded DNA using NAD as a coenzyme and as the energy source for the reaction. It is essential for DNA replication and repair of damaged DNA. The protein is DNA ligase of Tropheryma whipplei (strain TW08/27) (Whipple's bacillus).